Consider the following 461-residue polypeptide: E3 ubiquitin-protein ligase TRIM15 (461 aa).

An RING-type zinc finger spans residues 12–57 (CSDCQGRLEDAVTAACGHTFCRLCLPLPPQMGAQPSSRVLLCPVCQ). Residues 74-115 (LGETYCEEHGEKIYFFCENDAEFLCVFCREGPSHQAHAVGFL) form a B box-type zinc finger. The Zn(2+) site is built by C79, H82, C101, and H107. Residues 123–230 (RDRLRGRLEA…EKCQQPASEL (108 aa)) adopt a coiled-coil conformation. The region spanning 272–461 (EMLRAFSENL…KKGSCLTLKG (190 aa)) is the B30.2/SPRY domain.

It belongs to the TRIM/RBCC family. In terms of assembly, interacts with paxillin/PXN; this interaction recruits TRIM15 to focal adhesions. Interacts with TRIM8; this interaction prevents TRIM8 cytoplasmic translocation.

The protein resides in the cytoplasm. It is found in the nucleus. It localises to the cell junction. The protein localises to the focal adhesion. The enzyme catalyses S-ubiquitinyl-[E2 ubiquitin-conjugating enzyme]-L-cysteine + [acceptor protein]-L-lysine = [E2 ubiquitin-conjugating enzyme]-L-cysteine + N(6)-ubiquitinyl-[acceptor protein]-L-lysine.. Its function is as follows. E3 ubiquitin ligase that plays a role in several processes including innate antiviral immnity, cell migration and chemotaxis. Acts as a 'Lys-63'-specific ubiquitin ligase for MAPK1/ERK2 and MAPK3/ERK1, promoting their activation by facilitating their interaction with MAP2K1 and MAP2K2. Also plays a role in cell migration and chemotaxis by acting as a stable focal adhesion component upon recruitment by multi-adapter protein paxillin/PXN. Functions in the RIGI-mediated interferon induction pathway upstream or at the level of MAVS. Inhibits NF-kappa-B activation by turnover of 'Lys-63'-linked ubiquitination of MAP3K7/TAK1. Mechanistically, prevents TRIM8 cytoplasmic translocation and thus inhibits TRIM8-mediated 'Lys-63'-linked polyubiquitination of MAP3K7/TAK1 in the cytoplasm. Also has an important regulatory effect on the activation of hepatic stellate cells (HSCs). This chain is E3 ubiquitin-protein ligase TRIM15 (TRIM15), found in Sus scrofa (Pig).